The following is a 103-amino-acid chain: Large ribosomal subunit protein bL21 (103 aa).

Belongs to the bacterial ribosomal protein bL21 family. As to quaternary structure, part of the 50S ribosomal subunit. Contacts protein L20.

This protein binds to 23S rRNA in the presence of protein L20. This chain is Large ribosomal subunit protein bL21, found in Mycobacterium marinum (strain ATCC BAA-535 / M).